A 908-amino-acid polypeptide reads, in one-letter code: Transferrin-binding protein A (908 aa).

The signal sequence occupies residues 1–24 (MQQQHLFRLNILCLSLMTALPVYA). A TonB box motif is present at residues 38 to 45 (DTIQVKAK). A TBDR plug domain is found at 51 to 176 (RDNEVTGLGK…LAGSVAFQTK (126 aa)). Positions 187-908 (QWGIQSKTAY…NYTFSLEMKF (722 aa)) constitute a TBDR beta-barrel domain. The TonB C-terminal box motif lies at 891 to 908 (NRYAAPGRNYTFSLEMKF).

It belongs to the TonB-dependent receptor family. As to quaternary structure, binds both human apo- and holo-transferrin (TF), via the TF C-terminus. Forms a large complex with TF and TbpB.

It is found in the cell outer membrane. Neisseria acquires iron by extracting it from serum transferrin (TF) in its human host. Acts as a TF receptor and is required for TF utilization. Binds both apo- and holo-TF, via the TF C-terminus. The protein is Transferrin-binding protein A of Neisseria meningitidis serogroup B.